We begin with the raw amino-acid sequence, 437 residues long: Serine hydroxymethyltransferase 1 (437 aa).

Residues Leu132 and 136–138 contribute to the (6S)-5,6,7,8-tetrahydrofolate site; that span reads GHL. N6-(pyridoxal phosphate)lysine is present on Lys241.

The protein belongs to the SHMT family. Homodimer. Pyridoxal 5'-phosphate serves as cofactor.

Its subcellular location is the cytoplasm. The catalysed reaction is (6R)-5,10-methylene-5,6,7,8-tetrahydrofolate + glycine + H2O = (6S)-5,6,7,8-tetrahydrofolate + L-serine. It participates in one-carbon metabolism; tetrahydrofolate interconversion. The protein operates within amino-acid biosynthesis; glycine biosynthesis; glycine from L-serine: step 1/1. Catalyzes the reversible interconversion of serine and glycine with tetrahydrofolate (THF) serving as the one-carbon carrier. This reaction serves as the major source of one-carbon groups required for the biosynthesis of purines, thymidylate, methionine, and other important biomolecules. Also exhibits THF-independent aldolase activity toward beta-hydroxyamino acids, producing glycine and aldehydes, via a retro-aldol mechanism. The protein is Serine hydroxymethyltransferase 1 of Mesorhizobium japonicum (strain LMG 29417 / CECT 9101 / MAFF 303099) (Mesorhizobium loti (strain MAFF 303099)).